A 176-amino-acid polypeptide reads, in one-letter code: Putative Ras-related protein RABA4e (176 aa).

Belongs to the small GTPase superfamily. Rab family.

This is Putative Ras-related protein RABA4e (RABA4E) from Arabidopsis thaliana (Mouse-ear cress).